The sequence spans 474 residues: PTS system N-acetylmuramic acid-specific EIIBC component (474 aa).

Residues 1–89 form the PTS EIIB type-1 domain; that stretch reads MAKEISSELL…SELLGEAPVQ (89 aa). Residues 1–123 are Cytoplasmic-facing; the sequence is MAKEISSELL…LAKFATIFTP (123 aa). C29 functions as the Phosphocysteine intermediate; for EIIB activity in the catalytic mechanism. The region spanning 115–474 is the PTS EIIC type-1 domain; sequence AKFATIFTPL…LFGCRNVNLD (360 aa). A helical membrane pass occupies residues 124–144; it reads LIPGFIAAGLLLGIATLIATV. At 145–157 the chain is on the periplasmic side; the sequence is MHVPADAQGTLPD. The helical transmembrane segment at 158–178 threads the bilayer; it reads ALNFMKVFSKGLFTFLVILVG. Topologically, residues 179-180 are cytoplasmic; the sequence is YN. Residues 181–201 form a helical membrane-spanning segment; it reads AAQAFGGTGVNGAIIAALFLL. At 202–217 the chain is on the periplasmic side; sequence GYNPAATTGYYAGFHD. The helical transmembrane segment at 218-238 threads the bilayer; sequence FFGLPIDPRGNIIGVLIAAWA. Topologically, residues 239 to 260 are cytoplasmic; that stretch reads CARIEGMVRRFMPDDLDMLLTS. Residues 261 to 281 form a helical membrane-spanning segment; sequence LITLLITATLAYLIIMPLGGW. Topologically, residues 282 to 301 are periplasmic; that stretch reads LFEGMSWLFMHLNSNPLGCA. Residues 302 to 322 traverse the membrane as a helical segment; it reads VLAGLFLIAVVFGVHQGFIPV. At 323 to 334 the chain is on the cytoplasmic side; the sequence is YLALMDSQGFNS. A helical membrane pass occupies residues 335–355; that stretch reads LFPILSMAGAGQVGAALALYW. The Periplasmic portion of the chain corresponds to 356–368; sequence RAQPHSALRSQVR. Residues 369–389 form a helical membrane-spanning segment; it reads GAIIPGLLGVGEPLIYGVTLP. Over 390 to 393 the chain is Cytoplasmic; sequence RMKP. Residues 394–414 form a helical membrane-spanning segment; it reads FITACLGGAAGGLFIGLIAWW. At 415–440 the chain is on the periplasmic side; it reads GLPMGLNSAFGPSGLVALPLMTSAQG. The helical transmembrane segment at 441–461 threads the bilayer; that stretch reads ILPAMAVYAGGILVAWVCGFI. The Cytoplasmic segment spans residues 462–474; that stretch reads FTTLFGCRNVNLD.

The protein resides in the cell inner membrane. The enzyme catalyses N-acetyl-beta-D-muramate(out) + N(pros)-phospho-L-histidyl-[protein] = N-acetyl-beta-D-muramate 6-phosphate(in) + L-histidyl-[protein]. Functionally, the phosphoenolpyruvate-dependent sugar phosphotransferase system (sugar PTS), a major carbohydrate active transport system, catalyzes the phosphorylation of incoming sugar substrates concomitantly with their translocation across the cell membrane. This system is involved in N-acetylmuramic acid (MurNAc) transport, yielding cytoplasmic MurNAc-6-P. Is also able to take up anhydro-N-acetylmuramic acid (anhMurNAc), but cannot phosphorylate the carbon 6, probably because of the 1,6-anhydro ring. In Escherichia coli O157:H7, this protein is PTS system N-acetylmuramic acid-specific EIIBC component (murP).